The sequence spans 388 residues: Methylthioribose-1-phosphate isomerase (388 aa).

The Proton donor role is filled by D252.

It belongs to the eIF-2B alpha/beta/delta subunits family. MtnA subfamily.

The protein resides in the cytoplasm. Its subcellular location is the nucleus. It carries out the reaction 5-(methylsulfanyl)-alpha-D-ribose 1-phosphate = 5-(methylsulfanyl)-D-ribulose 1-phosphate. The protein operates within amino-acid biosynthesis; L-methionine biosynthesis via salvage pathway; L-methionine from S-methyl-5-thio-alpha-D-ribose 1-phosphate: step 1/6. In terms of biological role, catalyzes the interconversion of methylthioribose-1-phosphate (MTR-1-P) into methylthioribulose-1-phosphate (MTRu-1-P). The protein is Methylthioribose-1-phosphate isomerase of Verticillium alfalfae (strain VaMs.102 / ATCC MYA-4576 / FGSC 10136) (Verticillium wilt of alfalfa).